The chain runs to 505 residues: Transcription factor APG (505 aa).

Disordered stretches follow at residues 1–40, 61–99, 119–156, 169–242, 256–312, 324–344, and 469–505; these read MLRGNDTGSDLAELLWDNGAPAPLRPPPPPPFQPFTCSAA, GAANHHHHDDDDDDDDDVPWLHYHPVVDDDDDADADTAP, PAAAASRVDPDPCSSSHGAVVPSTSAAAAKQARTSGGG, PLQQ…APTT, AQRL…SQDE, RRSAARSSKRSRTAEVHNLSE, and PPPPPPPFPHAAATAVEQTPSPPGAADAGNAPAVKQA. Positions 23–33 are enriched in pro residues; sequence PLRPPPPPPFQ. Residues 131–144 are compositionally biased toward polar residues; that stretch reads CSSSHGAVVPSTSA. The span at 174–199 shows a compositional bias: low complexity; it reads PSGGETASASASAAATSTVPVESTVV. Polar residues predominate over residues 200-212; the sequence is QAATNRLRSTPLF. Positions 222-239 are enriched in pro residues; it reads PPKPSPRAAAPPPPPPLA. A compositionally biased stretch (basic and acidic residues) spans 288-299; that stretch reads GDRRQLNWRDSH. Residues 300–310 show a composition bias toward polar residues; it reads NNQSAEWSASQ. Positions 324–334 are enriched in basic residues; that stretch reads RRSAARSSKRS. Positions 335–344 are enriched in basic and acidic residues; sequence RTAEVHNLSE. A bHLH domain is found at 335-384; that stretch reads RTAEVHNLSERRRRDRINEKMRALQELIPNCNKIDKASMLEEAIEYLKTL. Residues 492-505 show a composition bias toward low complexity; sequence GAADAGNAPAVKQA.

Belongs to the bHLH protein family. Homodimer and heterodimer with ILI5 or ILI6.

The protein resides in the nucleus. Atypical bHLH transcription factor that acts as a negative regulator of grain size. Binds the transcription factor ILI6 and forms a heterodimer of antagonistic bHLH transcription factors that regulates grain length and weight by controlling cell elongation in lemma and palea. May be involved in the control of lamina inclination through brassinosteroid signaling pathway. This is Transcription factor APG (APG) from Oryza sativa subsp. japonica (Rice).